Here is a 542-residue protein sequence, read N- to C-terminus: Major facilitator superfamily domain-containing protein 6-like (542 aa).

Helical transmembrane passes span 46–66, 89–109, 198–218, 246–266, 272–292, 321–341, 352–372, 381–401, 404–424, 444–464, and 469–489; these read LGLS…LALL, LLSS…GILV, MFFL…PLEW, VGAA…FCRI, FYSY…LPIY, VTVI…LWLM, GICL…AGPL, WMLV…SFLW, WAVM…WWSV, FEAF…GFVV, and VNVL…ALAV.

It belongs to the major facilitator superfamily. MFSD6 family.

It is found in the membrane. The sequence is that of Major facilitator superfamily domain-containing protein 6-like (mfsd6l) from Danio rerio (Zebrafish).